The chain runs to 228 residues: MNSMAPVITIDGPSGSGKGTVAGLIARELGWKLLDSGALYRLLAFNASNHGVDLTNEELLTKLAAHLDVQFIAAEPGKLQQIILEGEDVSNVIRTETVGAGASMVASLPAVRDALLVRQREFREVPGLIADGRDMGTVVFPDAPLKVFLTASAEERARRRYLQLKGKGEDVSLSSLLDEIRARDERDTQRAVAPLKPAADAIQLDSTELSIEQVLQRIRSEIAQRDLI.

12–20 serves as a coordination point for ATP; it reads GPSGSGKGT.

Belongs to the cytidylate kinase family. Type 1 subfamily.

It is found in the cytoplasm. The enzyme catalyses CMP + ATP = CDP + ADP. The catalysed reaction is dCMP + ATP = dCDP + ADP. The polypeptide is Cytidylate kinase (Pseudomonas putida (strain ATCC 47054 / DSM 6125 / CFBP 8728 / NCIMB 11950 / KT2440)).